Consider the following 239-residue polypeptide: LexA repressor (239 aa).

The H-T-H motif DNA-binding region spans 27-47 (FDEMKDALDLASKSGIHRLIT). Catalysis depends on for autocatalytic cleavage activity residues serine 159 and lysine 197.

Belongs to the peptidase S24 family. Homodimer.

The enzyme catalyses Hydrolysis of Ala-|-Gly bond in repressor LexA.. Its function is as follows. Represses a number of genes involved in the response to DNA damage (SOS response), including recA and lexA. In the presence of single-stranded DNA, RecA interacts with LexA causing an autocatalytic cleavage which disrupts the DNA-binding part of LexA, leading to derepression of the SOS regulon and eventually DNA repair. This is LexA repressor from Rhizobium radiobacter (Agrobacterium tumefaciens).